Here is a 253-residue protein sequence, read N- to C-terminus: Succinate dehydrogenase [ubiquinone] iron-sulfur subunit, mitochondrial (253 aa).

In terms of domain architecture, 2Fe-2S ferredoxin-type spans 23–114; sequence FKIYRWNPDK…TTKIYPLPHM (92 aa). [2Fe-2S] cluster-binding residues include cysteine 74, cysteine 79, cysteine 82, and cysteine 94. One can recognise a 4Fe-4S ferredoxin-type domain in the interval 156-186; sequence DRKKLDGLYECILCACCSTSCPSYWWNQEEY. [4Fe-4S] cluster-binding residues include cysteine 166, cysteine 169, and cysteine 172. Cysteine 176 contributes to the [3Fe-4S] cluster binding site. Residue tryptophan 181 participates in a ubiquinone binding. [3Fe-4S] cluster is bound by residues cysteine 223 and cysteine 229. Cysteine 233 is a binding site for [4Fe-4S] cluster.

This sequence belongs to the succinate dehydrogenase/fumarate reductase iron-sulfur protein family. Component of complex II composed of four subunits: a flavoprotein (FP), an iron-sulfur protein (IP), and a cytochrome b composed of a large and a small subunit. The cofactor is [2Fe-2S] cluster. It depends on [3Fe-4S] cluster as a cofactor. [4Fe-4S] cluster serves as cofactor.

It is found in the mitochondrion inner membrane. It carries out the reaction a quinone + succinate = fumarate + a quinol. It functions in the pathway carbohydrate metabolism; tricarboxylic acid cycle; fumarate from succinate (eukaryal route): step 1/1. In terms of biological role, iron-sulfur protein (IP) subunit of succinate dehydrogenase (SDH) that is involved in complex II of the mitochondrial electron transport chain and is responsible for transferring electrons from succinate to ubiquinone (coenzyme Q). This is Succinate dehydrogenase [ubiquinone] iron-sulfur subunit, mitochondrial (SDH2) from Candida glabrata (strain ATCC 2001 / BCRC 20586 / JCM 3761 / NBRC 0622 / NRRL Y-65 / CBS 138) (Yeast).